The following is a 177-amino-acid chain: Small ribosomal subunit protein uS5 (177 aa).

Positions 19 to 82 (FIEKLVAIKR…DQAQKQMIKV (64 aa)) constitute an S5 DRBM domain.

The protein belongs to the universal ribosomal protein uS5 family. In terms of assembly, part of the 30S ribosomal subunit. Contacts proteins S4 and S8.

In terms of biological role, with S4 and S12 plays an important role in translational accuracy. Functionally, located at the back of the 30S subunit body where it stabilizes the conformation of the head with respect to the body. This is Small ribosomal subunit protein uS5 from Magnetococcus marinus (strain ATCC BAA-1437 / JCM 17883 / MC-1).